The chain runs to 296 residues: MTTLENPEMQAQLLSAALPYMQRYENKHVVVKYGGHAMGNPELGKAFARDVALLKQSGVNPIVVHGGGPQIQAMLTKLGIESRFEGGLRVTDEKTVEVVEMVLAGSINKEIVALINAEGEWAIGLCGKDGNMVFAQKAHKTVIDPDSNIEKVLDLGFVGEPAEVDRTLLDLLARSEMIPVIAPVAPGRDGHTYNINADTFAGAIAGALAATRLLFLTNVPGVLDKDKKLIKELSVADAQALIRDGTISGGMIPKVETCIDAIRRGVEGVVILNGKTPHSVLLELFTEHGAGTLIVP.

Substrate is bound by residues 67–68 (GG), Arg-89, and Asn-194.

This sequence belongs to the acetylglutamate kinase family. ArgB subfamily.

Its subcellular location is the cytoplasm. The enzyme catalyses N-acetyl-L-glutamate + ATP = N-acetyl-L-glutamyl 5-phosphate + ADP. It participates in amino-acid biosynthesis; L-arginine biosynthesis; N(2)-acetyl-L-ornithine from L-glutamate: step 2/4. Functionally, catalyzes the ATP-dependent phosphorylation of N-acetyl-L-glutamate. This is Acetylglutamate kinase from Brucella abortus (strain S19).